The chain runs to 407 residues: Substance-P receptor (407 aa).

Positions 1–20 (MDNVLPVDSDLFPNTSTNTS) are disordered. Over 1–31 (MDNVLPVDSDLFPNTSTNTSESNQFVQPTWQ) the chain is Extracellular. 2 N-linked (GlcNAc...) asparagine glycosylation sites follow: asparagine 14 and asparagine 18. A helical transmembrane segment spans residues 32 to 54 (IVLWAAAYTVIVVTSVVGNVVVI). Residues 55–64 (WIILAHKRMR) lie on the Cytoplasmic side of the membrane. The helical transmembrane segment at 65 to 86 (TVTNYFLVNLAFAEACMAAFNT) threads the bilayer. At 87 to 106 (VVNFTYAVHNVWYYGLFYCK) the chain is on the extracellular side. A disulfide bond links cysteine 105 and cysteine 180. A helical transmembrane segment spans residues 107 to 128 (FHNFFPIAALFASIYSMTAVAF). At 129–148 (DRYMAIIHPLQPRLSATATK) the chain is on the cytoplasmic side. Residues 149–169 (VVIFVIWVLALLLAFPQGYYS) form a helical membrane-spanning segment. The Extracellular segment spans residues 170–194 (TTETMPSRVVCMIEWPEHPNRTYEK). The helical transmembrane segment at 195–219 (AYHICVTVLIYFLPLLVIGYAYTVV) threads the bilayer. Residues 220 to 248 (GITLWASEIPGDSSDRYHEQVSAKRKVVK) lie on the Cytoplasmic side of the membrane. The helical transmembrane segment at 249-270 (MMIVVVCTFAICWLPFHIFFLL) threads the bilayer. Residues 271-283 (PYINPDLYLKKFI) lie on the Extracellular side of the membrane. A helical transmembrane segment spans residues 284–308 (QQVYLASMWLAMSSTMYNPIIYCCL). Residues 309 to 407 (NDRFRLGFKH…SSSFYSNMLA (99 aa)) are Cytoplasmic-facing. Residue cysteine 322 is the site of S-palmitoyl cysteine attachment. Residues 362 to 407 (VGAHEDEPEEGPKATPSSLDLTSNGSSRSNSKTMTESSSFYSNMLA) form a disordered region. The span at 376–407 (TPSSLDLTSNGSSRSNSKTMTESSSFYSNMLA) shows a compositional bias: polar residues.

The protein belongs to the G-protein coupled receptor 1 family. As to quaternary structure, interacts with ARRB1.

Its subcellular location is the cell membrane. This is a receptor for the tachykinin neuropeptide substance P. It is probably associated with G proteins that activate a phosphatidylinositol-calcium second messenger system. The rank order of affinity of this receptor to tachykinins is: substance P &gt; substance K &gt; neuromedin K. This Mus musculus (Mouse) protein is Substance-P receptor (Tacr1).